A 699-amino-acid polypeptide reads, in one-letter code: MVRFFGLNKKKNEEKENTDLPADNEQNAAETSSSNVSGNEERIDPNSHDANPENANNDDASTTFGSSIQSSSIFSRGRMTYGTGASSSMATSEMRSHSSGHSGSKNSKNLQGFKDVGKPLRAVSFLNPVKEEESQDTQNTLDVSSSTSSTLATSGNARENSFTSRRSITLEYIHKSLSELEENLVDIMDDIHQDVISISKAVIEAIEYFKEFLPTTRDRIPYRISLEKSSSLRKINKIVLHFLDNLLVSDAFSNSRSILLRRFYFFLKKLNLITDDDLISESGVLPCLSVFCIGSHCNLPSMDKLGMILDELTKMDSSIISDQEGAFIAPILRGITPKSSILTIMFGLPNLQHEHYEMIKVLYSLFPDVHMYCVKDYIKKAASAVGSIPSHTAATIDTIAPTKFQFSPPYAVSENPLELPISMSLSTETSAKITGTLGGYLFPQTGSDKKFSQFASCSFAITCAHVVLSEKQDYPNVMVPSNVLQTSYKKVLTKESDRYPDGSVEKTAFLEEVQRIDQNLNWQKSNKFGQVVWGERAIVDHRLSDFAIIKVNSSFKCQNTLGNGLKSFPDPTLRFQNLHVKRKIFKMKPGMKVFKIGASTGYTSGELNSTKLVYWADGKLQSSEFVVASPTPLFASAGDSGAWILTKLEDRLGLGLVGMLHSYDGEQRQFGLFTPIGDILERLHAVTKIQWDIDPQLDG.

2 disordered regions span residues 1 to 113 (MVRF…LQGF) and 129 to 158 (VKEEESQDTQNTLDVSSSTSSTLATSGNAR). The propeptide occupies 1 to 381 (MVRFFGLNKK…YCVKDYIKKA (381 aa)). The span at 24–38 (NEQNAAETSSSNVSG) shows a compositional bias: polar residues. Over residues 39-51 (NEERIDPNSHDAN) the composition is skewed to basic and acidic residues. Over residues 52–78 (PENANNDDASTTFGSSIQSSSIFSRGR) the composition is skewed to low complexity. The span at 83–93 (TGASSSMATSE) shows a compositional bias: polar residues. Low complexity-rich tracts occupy residues 97–109 (HSSGHSGSKNSKN) and 144–154 (SSSTSSTLATS). The interval 459–699 (FAITCAHVVL…QWDIDPQLDG (241 aa)) is serine protease. Catalysis depends on charge relay system residues histidine 465, aspartate 545, and serine 640.

This sequence belongs to the peptidase S64 family. Component of the plasma membrane SPS (SSY1-PTR3-SSY5) amino acid sensor complex. The propeptide is autoproteolytically cleaved from the catalytic domain but remains associated, forming an inactive protease complex. This processing occurs even in the absence of signaling.

The protein localises to the cell membrane. Protease component of the SPS-sensor system, which regulates the expression of several amino acid-metabolizing enzymes and amino acid- and peptide-permeases in response to extracellular amino acid levels by controlling the activity of two transcription factors, STP1 and STP2. Catalyzes the activation of these transcription factors, which are synthesized as latent cytoplasmic precursors, by proteolytic removal of an N-terminal inhibitory domain containing cytoplasmic retention motifs. SSY5 binds as an inactive protease complex to STP1. In response to extracellular amino acids and dependent on the other SPS-sensor components, the inhibitory propeptide is induced to dissociate, and thereby enables the catalytic domain to process STP1. This chain is SPS-sensor serine protease component SSY5 (SSY5), found in Saccharomyces cerevisiae (strain YJM789) (Baker's yeast).